The primary structure comprises 252 residues: NDR1/HIN1-like protein 6 (252 aa).

Residues 1-46 (MSQHQKIYPVQDPEAATARPTAPLVPRGSSRSEHGDPSKVPLNQRP) are disordered. Residues 70–90 (FCFLLLLVVAVGASIGILYLV) traverse the membrane as a helical segment. N-linked (GlcNAc...) asparagine glycans are attached at residues N121, N154, N166, and N180.

Homodimer. In terms of tissue distribution, highly expressed in seeds and at lower level in roots and senescing leaves. Expressed in leaves and flowers.

It localises to the cell membrane. The protein resides in the cytoplasm. The protein localises to the cytosol. In terms of biological role, plays an important role in the abiotic stresses-induced abscisic acid (ABA) signaling and biosynthesis. Acts as a positive regulator of ABA-mediated seed germination inhibition. Functions downstream of ABF2/AREB1, ABF4/AREB2 and ABF3. The chain is NDR1/HIN1-like protein 6 from Arabidopsis thaliana (Mouse-ear cress).